Here is an 89-residue protein sequence, read N- to C-terminus: Elongation factor 1-beta (89 aa).

It belongs to the EF-1-beta/EF-1-delta family.

Promotes the exchange of GDP for GTP in EF-1-alpha/GDP, thus allowing the regeneration of EF-1-alpha/GTP that could then be used to form the ternary complex EF-1-alpha/GTP/AAtRNA. The protein is Elongation factor 1-beta of Methanobrevibacter smithii (strain ATCC 35061 / DSM 861 / OCM 144 / PS).